We begin with the raw amino-acid sequence, 201 residues long: B-cell CLL/lymphoma 7 protein family member B-B (201 aa).

Residues 104-201 form a disordered region; the sequence is QSNTKVDSSS…VCTEHNSTVS (98 aa).

Belongs to the BCL7 family.

The sequence is that of B-cell CLL/lymphoma 7 protein family member B-B from Danio rerio (Zebrafish).